A 208-amino-acid chain; its full sequence is 3-demethoxyubiquinol 3-hydroxylase (208 aa).

6 residues coordinate Fe cation: Glu57, Glu87, His90, Glu139, Glu171, and His174.

This sequence belongs to the COQ7 family. Fe cation is required as a cofactor.

It is found in the cell membrane. The catalysed reaction is a 5-methoxy-2-methyl-3-(all-trans-polyprenyl)benzene-1,4-diol + AH2 + O2 = a 3-demethylubiquinol + A + H2O. It participates in cofactor biosynthesis; ubiquinone biosynthesis. In terms of biological role, catalyzes the hydroxylation of 2-nonaprenyl-3-methyl-6-methoxy-1,4-benzoquinol during ubiquinone biosynthesis. The protein is 3-demethoxyubiquinol 3-hydroxylase of Nitrosospira multiformis (strain ATCC 25196 / NCIMB 11849 / C 71).